Reading from the N-terminus, the 345-residue chain is MASLENPAIDSSSEFESSSEEISSSKESKPKEAPVTVPSTKTLNSPSAAVAVSDDSESEKQSFVLTRRKKKEGAAESPAVKSGKKEGAAESPAVKSGNNEGATESPAVKSGKKRASEGTTSRDMHVKRIKKEGDNKKGHAQRVWSEEDEISLLQAMIDFKAETGTSPWDHKDRFFDIAKKSISFDVSKVQFFDKIRSFKRKYFGDRKVRSVESDHDKKCLGLAVSFWGSDGVSLETPVKKKVKDESVLVKANSKEKNVKPLVKEDEQVVILGEDSEWFEESFLVPVIASLGLDEYSVKKKWSKVSVETKKRIQEKMKLVDAKKCELLLANMDVLKEVTSVLTQTN.

Residues 1–145 form a disordered region; it reads MASLENPAID…KKGHAQRVWS (145 aa). The segment covering 11–22 has biased composition (low complexity); that stretch reads SSSEFESSSEEI. The span at 23–32 shows a compositional bias: basic and acidic residues; it reads SSSKESKPKE. Positions 37–46 are enriched in polar residues; that stretch reads VPSTKTLNSP. Phosphoserine is present on Ser105. Positions 114–137 are enriched in basic and acidic residues; that stretch reads RASEGTTSRDMHVKRIKKEGDNKK.

This sequence belongs to the GeBP family. Expressed strongly in leaves and flowers, weakly in roots, and very weakly in stems.

It is found in the nucleus. Functionally, transcription repressor that binds DNA in a sequence-specific manner, 5'-GCCT-3', to regulate the expression of PGR. Acts as a modulatory component for the glucose-triggered developmental leaf growth process. This is Transcription factor STKL1 from Arabidopsis thaliana (Mouse-ear cress).